Here is a 228-residue protein sequence, read N- to C-terminus: uncharacterized protein (228 aa).

An N-terminal signal peptide occupies residues 1–28 (MRKKRVITCVMAASLTLGSLLPAGYASA).

This is an uncharacterized protein from Bacillus subtilis (strain 168).